A 590-amino-acid polypeptide reads, in one-letter code: Zinc finger protein 703 (590 aa).

The span at 1–14 shows a compositional bias: polar residues; it reads MSDSPAGSNPRTPE. Disordered stretches follow at residues 1–43, 96–293, and 341–366; these read MSDS…DPLR, CSQI…AGHV, and LVGG…LTGA. At Ser2 the chain carries N-acetylserine. Low complexity-rich tracts occupy residues 27–37, 128–139, 171–189, and 207–219; these read PAVPAAVSLLP, RSAPGAASAAAA, GSSS…PGDK, and APVS…SSPG. The segment covering 241 to 251 has biased composition (basic and acidic residues); the sequence is ELDKKDQEPKP. Ser252 carries the post-translational modification Phosphoserine. Gly residues-rich tracts occupy residues 260 to 273 and 341 to 352; these read RGGG…GGAE and LVGGQLSGGLGL. A C2H2-type zinc finger spans residues 456-484; sequence HSCNWVAASGPCDKRFATSEELLSHLRTH. Arg580 carries the omega-N-methylarginine modification.

This sequence belongs to the Elbow/Noc family. As to quaternary structure, interacts with TLE4; increases transcriptional repression. Interacts with DCAF7 and PHB2. May interact with HSPD1. As to expression, expressed in mammary epithelium.

Its subcellular location is the nucleus. The protein localises to the cytoplasm. Its function is as follows. Transcriptional corepressor which does not bind directly to DNA and may regulate transcription through recruitment of histone deacetylases to gene promoters. Regulates cell adhesion, migration and proliferation. May be required for segmental gene expression during hindbrain development. This is Zinc finger protein 703 (ZNF703) from Homo sapiens (Human).